The chain runs to 317 residues: Protease 7 (317 aa).

The N-terminal stretch at 1–20 is a signal peptide; the sequence is MRAKLLGIVLTTPIAISSFA. The Periplasmic segment spans residues 21 to 31; sequence STETLSFTPDN. Residues 32–41 traverse the membrane as a beta stranded segment; the sequence is INADISLGTL. Topologically, residues 42 to 69 are extracellular; the sequence is SGKTKERVYLAEEGGRKVSQLDWKFNNA. The chain crosses the membrane as a beta stranded span at residues 70 to 78; that stretch reads AIIKGAINW. Topologically, residues 79–83 are periplasmic; it reads DLMPQ. The chain crosses the membrane as a beta stranded span at residues 84-92; it reads ISIGAAGWT. Over 93–130 the chain is Extracellular; that stretch reads TLGSRGGNMVDQDWMDSSNPGTWTDESRHPDTQLNYAN. Active-site residues include D103 and D105. A beta stranded transmembrane segment spans residues 131 to 140; it reads EFDLNIKGWL. The Periplasmic segment spans residues 141–145; it reads LNEPN. Residues 146–156 traverse the membrane as a beta stranded segment; the sequence is YRLGLMAGYQE. Topologically, residues 157-197 are extracellular; that stretch reads SRYSFTARGGSYIYSSEEGFRDDIGSFPNGERAIGYKQRFK. The beta stranded transmembrane segment at 198–209 threads the bilayer; that stretch reads MPYIGLTGSYRY. Residues 210–211 are Periplasmic-facing; sequence ED. The beta stranded transmembrane segment at 212-221 threads the bilayer; it reads FELGGTFKYS. Topologically, residues 222 to 250 are extracellular; it reads GWVESSDNDEHYDPGKRITYRSKVKDQNY. Residues D230 and H232 contribute to the active site. A beta stranded membrane pass occupies residues 251–261; the sequence is YSVAVNAGYYV. At 262 to 264 the chain is on the periplasmic side; it reads TPN. A beta stranded transmembrane segment spans residues 265–274; it reads AKVYVEGAWN. Over 275 to 306 the chain is Extracellular; sequence RVTNKKGNTSLYDHNNNTSDYSKNGAGIENYN. A beta stranded transmembrane segment spans residues 307–316; that stretch reads FITTAGLKYT. Residue F317 is a topological domain, periplasmic.

Belongs to the peptidase A26 family. In terms of assembly, homopentamer.

The protein localises to the cell outer membrane. The enzyme catalyses Has a virtual requirement for Arg in the P1 position and a slightly less stringent preference for this residue in the P1' position, which can also contain Lys, Gly or Val.. Inhibited by zinc. Functionally, protease that can cleave T7 RNA polymerase, ferric enterobactin receptor protein (FEP), antimicrobial peptide protamine and other proteins. This protease has a specificity for paired basic residues. This is Protease 7 (ompT) from Escherichia coli (strain K12).